Reading from the N-terminus, the 419-residue chain is uncharacterized protein (419 aa).

[4Fe-4S] cluster is bound by residues C38, C44, C47, and C126. S-adenosyl-L-methionine is bound by residues Q250, Y280, E301, and D346. C373 serves as the catalytic Nucleophile.

This sequence belongs to the class I-like SAM-binding methyltransferase superfamily. RNA M5U methyltransferase family.

This is an uncharacterized protein from Prochlorococcus marinus (strain SARG / CCMP1375 / SS120).